The chain runs to 328 residues: Malate dehydrogenase (328 aa).

12–18 (GAAGQIG) serves as a coordination point for NAD(+). Substrate is bound by residues Arg93 and Arg99. Residues Asn106, Gln113, and 130–132 (VGN) each bind NAD(+). Positions 132 and 166 each coordinate substrate. The active-site Proton acceptor is His191.

It belongs to the LDH/MDH superfamily. MDH type 2 family.

The enzyme catalyses (S)-malate + NAD(+) = oxaloacetate + NADH + H(+). Functionally, catalyzes the reversible oxidation of malate to oxaloacetate. In Dechloromonas aromatica (strain RCB), this protein is Malate dehydrogenase.